Reading from the N-terminus, the 230-residue chain is Cytochrome c oxidase subunit 2 (230 aa).

Topologically, residues 1–14 (MAHPSQLGFQDAAS) are mitochondrial intermembrane. Residues 15–45 (PVMEELLHFHDHALMIVLLISTLVLYIIVAM) traverse the membrane as a helical segment. At 46-59 (VSTKLTNMYILDSQ) the chain is on the mitochondrial matrix side. A helical membrane pass occupies residues 60–87 (EIEIVWTVLPAVILILIALPSLRILYLM). At 88–230 (DEINDPHLTI…KWSTMMLEDA (143 aa)) the chain is on the mitochondrial intermembrane side. 6 residues coordinate Cu cation: histidine 161, cysteine 196, glutamate 198, cysteine 200, histidine 204, and methionine 207. Glutamate 198 is a binding site for Mg(2+).

Belongs to the cytochrome c oxidase subunit 2 family. In terms of assembly, component of the cytochrome c oxidase (complex IV, CIV), a multisubunit enzyme composed of 14 subunits. The complex is composed of a catalytic core of 3 subunits MT-CO1, MT-CO2 and MT-CO3, encoded in the mitochondrial DNA, and 11 supernumerary subunits COX4I, COX5A, COX5B, COX6A, COX6B, COX6C, COX7A, COX7B, COX7C, COX8 and NDUFA4, which are encoded in the nuclear genome. The complex exists as a monomer or a dimer and forms supercomplexes (SCs) in the inner mitochondrial membrane with NADH-ubiquinone oxidoreductase (complex I, CI) and ubiquinol-cytochrome c oxidoreductase (cytochrome b-c1 complex, complex III, CIII), resulting in different assemblies (supercomplex SCI(1)III(2)IV(1) and megacomplex MCI(2)III(2)IV(2)). Found in a complex with TMEM177, COA6, COX18, COX20, SCO1 and SCO2. Interacts with TMEM177 in a COX20-dependent manner. Interacts with COX20. Interacts with COX16. The cofactor is Cu cation.

It localises to the mitochondrion inner membrane. It carries out the reaction 4 Fe(II)-[cytochrome c] + O2 + 8 H(+)(in) = 4 Fe(III)-[cytochrome c] + 2 H2O + 4 H(+)(out). Its function is as follows. Component of the cytochrome c oxidase, the last enzyme in the mitochondrial electron transport chain which drives oxidative phosphorylation. The respiratory chain contains 3 multisubunit complexes succinate dehydrogenase (complex II, CII), ubiquinol-cytochrome c oxidoreductase (cytochrome b-c1 complex, complex III, CIII) and cytochrome c oxidase (complex IV, CIV), that cooperate to transfer electrons derived from NADH and succinate to molecular oxygen, creating an electrochemical gradient over the inner membrane that drives transmembrane transport and the ATP synthase. Cytochrome c oxidase is the component of the respiratory chain that catalyzes the reduction of oxygen to water. Electrons originating from reduced cytochrome c in the intermembrane space (IMS) are transferred via the dinuclear copper A center (CU(A)) of subunit 2 and heme A of subunit 1 to the active site in subunit 1, a binuclear center (BNC) formed by heme A3 and copper B (CU(B)). The BNC reduces molecular oxygen to 2 water molecules using 4 electrons from cytochrome c in the IMS and 4 protons from the mitochondrial matrix. The protein is Cytochrome c oxidase subunit 2 (mt-co2) of Oncorhynchus mykiss (Rainbow trout).